Here is a 533-residue protein sequence, read N- to C-terminus: Retinoid isomerohydrolase (533 aa).

The S-palmitoyl cysteine; in membrane form moiety is linked to residue cysteine 112. A Phosphoserine modification is found at serine 117. Histidine 180 is a Fe cation binding site. Cysteine 231 is lipidated: S-palmitoyl cysteine; in membrane form. Histidine 241 and histidine 313 together coordinate Fe cation. The S-palmitoyl cysteine; in membrane form moiety is linked to residue cysteine 329. Histidine 527 contributes to the Fe cation binding site.

The protein belongs to the carotenoid oxygenase family. It depends on Fe(2+) as a cofactor. Palmitoylation by LRAT regulates ligand binding specificity; the palmitoylated form (membrane form) specifically binds all-trans-retinyl-palmitate, while the soluble unpalmitoylated form binds all-trans-retinol (vitamin A). Retinal pigment epithelium specific.

It is found in the cytoplasm. It localises to the cell membrane. The protein localises to the microsome membrane. It catalyses the reaction an all-trans-retinyl ester + H2O = 11-cis-retinol + a fatty acid + H(+). The enzyme catalyses lutein = (3R,3'S)-zeaxanthin. The catalysed reaction is all-trans-retinyl hexadecanoate + H2O = 11-cis-retinol + hexadecanoate + H(+). In terms of biological role, critical isomerohydrolase in the retinoid cycle involved in regeneration of 11-cis-retinal, the chromophore of rod and cone opsins. Catalyzes the cleavage and isomerization of all-trans-retinyl fatty acid esters to 11-cis-retinol which is further oxidized by 11-cis retinol dehydrogenase to 11-cis-retinal for use as visual chromophore. Essential for the production of 11-cis retinal for both rod and cone photoreceptors. Also capable of catalyzing the isomerization of lutein to meso-zeaxanthin an eye-specific carotenoid. The soluble form binds vitamin A (all-trans-retinol), making it available for LRAT processing to all-trans-retinyl ester. The membrane form, palmitoylated by LRAT, binds all-trans-retinyl esters, making them available for IMH (isomerohydrolase) processing to all-cis-retinol. The soluble form is regenerated by transferring its palmitoyl groups onto 11-cis-retinol, a reaction catalyzed by LRAT. In Gallus gallus (Chicken), this protein is Retinoid isomerohydrolase (RPE65).